The following is a 273-amino-acid chain: Dermonecrotic toxin LapSicTox-alphaIB1aii (273 aa).

His-5 is an active-site residue. Positions 25 and 27 each coordinate Mg(2+). His-41 (nucleophile) is an active-site residue. 2 cysteine pairs are disulfide-bonded: Cys-45–Cys-51 and Cys-47–Cys-190. Asp-85 contacts Mg(2+). Asn-250 carries N-linked (GlcNAc...) asparagine glycosylation.

The protein belongs to the arthropod phospholipase D family. Class II subfamily. Requires Mg(2+) as cofactor. Expressed by the venom gland.

The protein resides in the secreted. The enzyme catalyses an N-(acyl)-sphingosylphosphocholine = an N-(acyl)-sphingosyl-1,3-cyclic phosphate + choline. The catalysed reaction is an N-(acyl)-sphingosylphosphoethanolamine = an N-(acyl)-sphingosyl-1,3-cyclic phosphate + ethanolamine. It catalyses the reaction a 1-acyl-sn-glycero-3-phosphocholine = a 1-acyl-sn-glycero-2,3-cyclic phosphate + choline. It carries out the reaction a 1-acyl-sn-glycero-3-phosphoethanolamine = a 1-acyl-sn-glycero-2,3-cyclic phosphate + ethanolamine. In terms of biological role, dermonecrotic toxins cleave the phosphodiester linkage between the phosphate and headgroup of certain phospholipids (sphingolipid and lysolipid substrates), forming an alcohol (often choline) and a cyclic phosphate. This toxin acts on sphingomyelin (SM). It may also act on ceramide phosphoethanolamine (CPE), lysophosphatidylcholine (LPC) and lysophosphatidylethanolamine (LPE), but not on lysophosphatidylserine (LPS), and lysophosphatidylglycerol (LPG). It acts by transphosphatidylation, releasing exclusively cyclic phosphate products as second products. Induces dermonecrosis, hemolysis, increased vascular permeability, edema, inflammatory response, and platelet aggregation. This is Dermonecrotic toxin LapSicTox-alphaIB1aii from Loxosceles apachea (Apache recluse spider).